The primary structure comprises 257 residues: UPF0246 protein BF3795 (257 aa).

The protein belongs to the UPF0246 family.

The sequence is that of UPF0246 protein BF3795 from Bacteroides fragilis (strain ATCC 25285 / DSM 2151 / CCUG 4856 / JCM 11019 / LMG 10263 / NCTC 9343 / Onslow / VPI 2553 / EN-2).